Consider the following 262-residue polypeptide: Dimeric xanthone biosynthesis cluster protein R11 (262 aa).

The tract at residues 69 to 160 (IADLLFYTKT…PQLFKHLNDE (92 aa)) is hemerythrin-like.

The protein operates within secondary metabolite biosynthesis. In terms of biological role, part of the gene cluster that mediates the biosynthesis of the dimeric xanthones cryptosporioptides. The pathway begins with the synthesis of atrochrysone thioester by the polyketide synthase dmx-nrPKS. The atrochrysone carboxyl ACP thioesterase dmxR1 then breaks the thioester bond and releases the atrochrysone carboxylic acid from dmx-nrPKS. Atrochrysone carboxylic acid is decarboxylated by the decarboxylase dmxR15, and oxidized by the anthrone oxygenase dmxR16 to yield emodin. Emodin is then reduced to emodin hydroquinone by the oxidoreductase dmxR7. A-ring reduction by the short chain dehydrogenase dmxR18, dehydration by the scytalone dehydratase-like protein dmxR17 and probable spontaneous re-oxidation, results in overall deoxygenation to chrysophanol. Baeyer-Villiger oxidation by the Baeyer-Villiger monooxygenase (BVMO) dmxR6 then yields monodictylactone in equilibrium with monodictyphenone. In the case of the cryptosporioptides biosynthesis, monodictylactone is reduced at C-12 to an alcohol (by the short chain dehydrogenases dmxR12 or dmxR8) and hydroxylated at C-5 by dmxR9, yielding the electron-rich aromatic which could eliminate H(2)O to form the ortho-quinonemethide, followed by tautomerisation to paraquinone and complete the formal reduction to produce the 10-methylgroup. Conjugate addition of C-4a-OH to the resulting paraquinone by the monooxygenase dmxR10 then gives cyclohexadienone, which is then reduced at C-5 by the short chain dehydrogenase dmxR3 to give the dihydroxanthone. The 6,7-epoxide in the cryptosporioptides could be introduced by the cytochrome P450 monooxygenase dmxL3. The highly reducing PKS dmxL2 manufactures butyrate, which is further carboxylated by dmxL1 to form ethylmalonate. It is not yet clear whether the carboxylation occurs while the butyrate is attached to the ACP of dmxL2, but this unusual fungal metabolite could then be esterified to O-5 by the O-acetyltransferase dmxR13. Finally, dimerization performed by dmxR5 gives the observed dimers cryptosporioptides A, B and C as the final products of the pathway. This is Dimeric xanthone biosynthesis cluster protein R11 from Cryptosporiopsis sp. (strain 8999).